The sequence spans 37 residues: Potassium channel toxin alpha-KTx 11.2 (37 aa).

Disulfide bonds link Cys-8–Cys-27, Cys-13–Cys-33, and Cys-17–Cys-35.

Belongs to the short scorpion toxin superfamily. Potassium channel inhibitor family. Alpha-KTx 11 subfamily. Expressed by the venom gland.

Its subcellular location is the secreted. Binds and inhibits voltage-sensitive potassium channels. Inhibits the vertebrate potassium channel Kv1.1/KCNA1 with low affinity. This Parabuthus villosus (Black hairy thick-tailed scorpion) protein is Potassium channel toxin alpha-KTx 11.2.